A 305-amino-acid chain; its full sequence is N-acetyl-D-glucosamine kinase (305 aa).

ATP is bound by residues 4–11 and 133–140; these read GFDIGGTK and GFGGGLVF. Residues H157, C178, C180, and C185 each coordinate Zn(2+).

This sequence belongs to the ROK (NagC/XylR) family. NagK subfamily.

The catalysed reaction is N-acetyl-D-glucosamine + ATP = N-acetyl-D-glucosamine 6-phosphate + ADP + H(+). The protein operates within cell wall biogenesis; peptidoglycan recycling. Catalyzes the phosphorylation of N-acetyl-D-glucosamine (GlcNAc) derived from cell-wall degradation, yielding GlcNAc-6-P. In Histophilus somni (strain 129Pt) (Haemophilus somnus), this protein is N-acetyl-D-glucosamine kinase.